A 430-amino-acid chain; its full sequence is Dihydroorotase (430 aa).

The Zn(2+) site is built by His60 and His62. Substrate contacts are provided by residues 62–64 and Asn94; that span reads HLR. Zn(2+)-binding residues include Asp152, His179, His232, and Asp305. Residue Asp305 is part of the active site. Substrate contacts are provided by residues His309 and 323–324; that span reads FG.

It belongs to the metallo-dependent hydrolases superfamily. DHOase family. Class I DHOase subfamily. Requires Zn(2+) as cofactor.

It catalyses the reaction (S)-dihydroorotate + H2O = N-carbamoyl-L-aspartate + H(+). The protein operates within pyrimidine metabolism; UMP biosynthesis via de novo pathway; (S)-dihydroorotate from bicarbonate: step 3/3. In terms of biological role, catalyzes the reversible cyclization of carbamoyl aspartate to dihydroorotate. The polypeptide is Dihydroorotase (Solibacter usitatus (strain Ellin6076)).